Reading from the N-terminus, the 500-residue chain is FAD-linked oxidoreductase srdI (500 aa).

The first 20 residues, 1–20, serve as a signal peptide directing secretion; that stretch reads MHLSSSLLFTSALLAGGINA. Asparagine 47 is a glycosylation site (N-linked (GlcNAc...) asparagine). Positions 69–241 constitute an FAD-binding PCMH-type domain; the sequence is YRPPSYQAAI…TQATYKMHKS (173 aa). N-linked (GlcNAc...) asparagine glycans are attached at residues asparagine 257 and asparagine 282.

This sequence belongs to the oxygen-dependent FAD-linked oxidoreductase family. FAD serves as cofactor.

Its function is as follows. FAD-linked oxidoreductase; part of the gene cluster that mediates the biosynthesis of sordarial, a salicylic aldehyde structurally related to the phytotoxin pyriculol. The most interesting aspect of this pathway is formation of an aromatic product from the highly reducing polyketide synthase srdA. SrdA synthesizes a reduced polyketide chain from one molecule of acetyl-CoA and five molecules of malonyl-CoA. The polyketide chain is then reductively released as an aldehyde. The oxidoreductases srdC, srdD and srdE then oxidize one of the hydroxy groups to facilitate the intramolecular aldol condensation, followed by dehydration to yield a salicylic aldehyde. This aldehyde can undergo facile reduction by endogenous reductases to yield the alcohol 1-hydroxy-2-hydroxymethyl-3-pent-1,3-dienylbenzene. The flavin-dependent srdI counteract against the propensity of the aldehydes to be reduced under physiological conditions and is responsible for reoxidizing 1-hydroxy-2-hydroxymethyl-3-pent-1,3-dienylbenzene back to the salicylic aldehyde. This salicylic aldehyde is then selectively epoxidized by the cupin-domain-containing oxidoreductase srdB to yield the epoxide, which can be hydrolyzed stereoselectively by the hydrolase srdG to give the final product sordarial. This Neurospora crassa (strain ATCC 24698 / 74-OR23-1A / CBS 708.71 / DSM 1257 / FGSC 987) protein is FAD-linked oxidoreductase srdI.